The chain runs to 253 residues: ABC transporter D-alanine-binding periplasmic protein (253 aa).

The N-terminal stretch at 1–22 (MLSKKFGLSMIVLGIMSSSAFA) is a signal peptide. Residues Gly-95, Ser-97, Arg-102, Ala-147, and Glu-191 each contribute to the D-alanine site.

The protein belongs to the bacterial solute-binding protein 3 family. Monomer.

The protein localises to the periplasm. Functionally, part of the ABC transporter complex dalSTUV, that imports D-alanine into the cytoplasm. Helps protect the organism from oxidative killing by host neutrophils through sequestration of D-alanine, a substrate that is converted to hydrogen peroxide by the host enzyme DAO (D-amino acid oxidase). DalS shuttles D-alanine from the periplasm to the DalTUV complex situated in the inner membrane and through hydrolysis of ATP, D-alanine is transported across the membrane into the cytoplasm. Not required for the metabolism of D-alanine found in the stem peptide of peptidoglycan. This Salmonella typhimurium (strain LT2 / SGSC1412 / ATCC 700720) protein is ABC transporter D-alanine-binding periplasmic protein.